A 314-amino-acid chain; its full sequence is DNA-directed RNA polymerase subunit alpha (314 aa).

Residues 1 to 228 (MIEIEKPVIE…EHLNIFVGLT (228 aa)) are alpha N-terminal domain (alpha-NTD). Positions 245–314 (KEKVLEMTIE…ELGLGLRKEE (70 aa)) are alpha C-terminal domain (alpha-CTD).

The protein belongs to the RNA polymerase alpha chain family. In terms of assembly, homodimer. The RNAP catalytic core consists of 2 alpha, 1 beta, 1 beta' and 1 omega subunit. When a sigma factor is associated with the core the holoenzyme is formed, which can initiate transcription.

The catalysed reaction is RNA(n) + a ribonucleoside 5'-triphosphate = RNA(n+1) + diphosphate. In terms of biological role, DNA-dependent RNA polymerase catalyzes the transcription of DNA into RNA using the four ribonucleoside triphosphates as substrates. This chain is DNA-directed RNA polymerase subunit alpha, found in Halalkalibacterium halodurans (strain ATCC BAA-125 / DSM 18197 / FERM 7344 / JCM 9153 / C-125) (Bacillus halodurans).